Reading from the N-terminus, the 954-residue chain is Glycine dehydrogenase (decarboxylating) (954 aa).

K706 carries the N6-(pyridoxal phosphate)lysine modification.

Belongs to the GcvP family. The glycine cleavage system is composed of four proteins: P, T, L and H. Pyridoxal 5'-phosphate is required as a cofactor.

The enzyme catalyses N(6)-[(R)-lipoyl]-L-lysyl-[glycine-cleavage complex H protein] + glycine + H(+) = N(6)-[(R)-S(8)-aminomethyldihydrolipoyl]-L-lysyl-[glycine-cleavage complex H protein] + CO2. Functionally, the glycine cleavage system catalyzes the degradation of glycine. The P protein binds the alpha-amino group of glycine through its pyridoxal phosphate cofactor; CO(2) is released and the remaining methylamine moiety is then transferred to the lipoamide cofactor of the H protein. The chain is Glycine dehydrogenase (decarboxylating) from Thermosynechococcus vestitus (strain NIES-2133 / IAM M-273 / BP-1).